The sequence spans 1413 residues: DNA-directed RNA polymerase subunit beta' (1413 aa).

Zn(2+) contacts are provided by Cys-70, Cys-72, Cys-85, and Cys-88. Mg(2+) is bound by residues Asp-460, Asp-462, and Asp-464. Positions 819, 893, 900, and 903 each coordinate Zn(2+). The interval 1392-1413 (EEAFDFGTPSAPAEEPQHPAAE) is disordered.

This sequence belongs to the RNA polymerase beta' chain family. As to quaternary structure, the RNAP catalytic core consists of 2 alpha, 1 beta, 1 beta' and 1 omega subunit. When a sigma factor is associated with the core the holoenzyme is formed, which can initiate transcription. Mg(2+) serves as cofactor. The cofactor is Zn(2+).

It catalyses the reaction RNA(n) + a ribonucleoside 5'-triphosphate = RNA(n+1) + diphosphate. In terms of biological role, DNA-dependent RNA polymerase catalyzes the transcription of DNA into RNA using the four ribonucleoside triphosphates as substrates. This chain is DNA-directed RNA polymerase subunit beta', found in Burkholderia orbicola (strain MC0-3).